The sequence spans 141 residues: VLSSDDKCNVKAVWCKVAGHLEEYGAEALERMFCAYPQTKIYFPHFDLSHGSAQIRAHGKKVFAALHEAVNHIDDLPGALCRLSELHAHSLRVDPVNFKFLAQCVLVVVAIHHPGSLTPEVHASLDKFLCAVSSVLTSKYR.

Residues valine 1–arginine 141 enclose the Globin domain. Position 58 (histidine 58) interacts with O2. Histidine 87 contacts heme b.

This sequence belongs to the globin family. Heterotetramer of two alpha chains and two beta chains. As to expression, red blood cells.

Involved in oxygen transport from the lung to the various peripheral tissues. Has antimicrobial activity against B.subtilis ATCC 6633. Has antioxidant activity. The protein is Hemoglobin subunit alpha of Crocodylus siamensis (Siamese crocodile).